A 789-amino-acid polypeptide reads, in one-letter code: Probable 3-hydroxyacyl-CoA dehydrogenase (789 aa).

This sequence belongs to the 3-hydroxyacyl-CoA dehydrogenase family.

The catalysed reaction is a (3S)-3-hydroxyacyl-CoA + NAD(+) = a 3-oxoacyl-CoA + NADH + H(+). It participates in lipid metabolism; fatty acid beta-oxidation. Its function is as follows. Involved in the degradation of long-chain fatty acids. This Bacillus subtilis (strain 168) protein is Probable 3-hydroxyacyl-CoA dehydrogenase (fadN).